A 309-amino-acid polypeptide reads, in one-letter code: Tumor necrosis factor ligand superfamily member 9 (309 aa).

Positions 1 to 16 (MDQHTLDVEDTADARH) are enriched in basic and acidic residues. The segment at 1–20 (MDQHTLDVEDTADARHPAGT) is disordered. Residues 1–82 (MDQHTLDVED…ALNFCSRHPK (82 aa)) lie on the Cytoplasmic side of the membrane. Residues 83 to 103 (LYGLVALVLLLLIAACVPIFT) form a helical; Signal-anchor for type II membrane protein membrane-spanning segment. Residues 104 to 309 (RTEPRPALTI…FLVKPDNPWE (206 aa)) are Extracellular-facing. Asparagine 139, asparagine 161, and asparagine 293 each carry an N-linked (GlcNAc...) asparagine glycan. The region spanning 147–302 (VFAKLLAKNQ…NTTSFGLFLV (156 aa)) is the THD domain.

The protein belongs to the tumor necrosis factor family. As to quaternary structure, homotrimer.

The protein resides in the membrane. In terms of biological role, cytokine that binds to TNFRSF9. Induces the proliferation of activated peripheral blood T-cells. May have a role in activation-induced cell death (AICD). May play a role in cognate interactions between T-cells and B-cells/macrophages. The sequence is that of Tumor necrosis factor ligand superfamily member 9 (Tnfsf9) from Mus musculus (Mouse).